Consider the following 218-residue polypeptide: Glutathione S-transferase Mu 1 (218 aa).

Residues 2–88 enclose the GST N-terminal domain; sequence PMTLGYWDIR…YIARKHNLCG (87 aa). Residue 7–8 participates in glutathione binding; the sequence is YW. A Phosphothreonine modification is found at Thr34. Glutathione contacts are provided by residues 43–46, Lys50, 59–60, and 72–73; these read RSQW, NL, and QS. The 119-residue stretch at 90–208 folds into the GST C-terminal domain; sequence TEEEKIRVDI…KSSRFLPKPL (119 aa). Tyr116 is a substrate binding site.

It belongs to the GST superfamily. Mu family. As to quaternary structure, homodimer.

It localises to the cytoplasm. The catalysed reaction is RX + glutathione = an S-substituted glutathione + a halide anion + H(+). The enzyme catalyses prostaglandin A2 + glutathione = prostaglandin A2-S-(R)-glutathione. It catalyses the reaction prostaglandin J2 + glutathione = prostaglandin J2-S-(R)-glutathione. It carries out the reaction prostaglandin J2 + glutathione = prostaglandin J2-S-(S)-glutathione. The catalysed reaction is prostaglandin A2 + glutathione = prostaglandin A2-S-(S)-glutathione. The enzyme catalyses 11(S)-hydroxy-14(S),15(S)-epoxy-(5Z,8Z,12E)-eicosatrienoate + glutathione = (11S,15S)-dihydroxy-14(R)-S-glutathionyl-(5Z,8Z,12E)-eicosatrienoate. Conjugation of reduced glutathione to a wide number of exogenous and endogenous hydrophobic electrophiles. Involved in the formation of glutathione conjugates of both prostaglandin A2 (PGA2) and prostaglandin J2 (PGJ2). Participates in the formation of novel hepoxilin regioisomers. The polypeptide is Glutathione S-transferase Mu 1 (GSTM1) (Macaca fascicularis (Crab-eating macaque)).